A 348-amino-acid polypeptide reads, in one-letter code: GTPase Obg (348 aa).

In terms of domain architecture, Obg spans 1 to 159 (MKFLDLAKVY…RTIWLRLKLI (159 aa)). Residues 160–327 (ADAGLLGLPN…VLRAVRAEID (168 aa)) enclose the OBG-type G domain. GTP is bound by residues 166–173 (GLPNAGKS), 191–195 (FTTLH), 212–215 (DIPG), 279–282 (NKID), and 308–310 (SSV). Residues Ser173 and Thr193 each coordinate Mg(2+).

The protein belongs to the TRAFAC class OBG-HflX-like GTPase superfamily. OBG GTPase family. As to quaternary structure, monomer. Requires Mg(2+) as cofactor.

Its subcellular location is the cytoplasm. An essential GTPase which binds GTP, GDP and possibly (p)ppGpp with moderate affinity, with high nucleotide exchange rates and a fairly low GTP hydrolysis rate. Plays a role in control of the cell cycle, stress response, ribosome biogenesis and in those bacteria that undergo differentiation, in morphogenesis control. The polypeptide is GTPase Obg (Ruegeria sp. (strain TM1040) (Silicibacter sp.)).